Consider the following 91-residue polypeptide: Small ribosomal subunit protein bS16 (91 aa).

This sequence belongs to the bacterial ribosomal protein bS16 family. As to quaternary structure, part of the 30S ribosomal subunit.

Functionally, binds to the lower part of the body of the 30S subunit, where it stabilizes two of its domains. In Thermus thermophilus, this protein is Small ribosomal subunit protein bS16.